A 287-amino-acid chain; its full sequence is Acetylglutamate kinase (287 aa).

Substrate contacts are provided by residues 65 to 66 (GG), arginine 87, and asparagine 181.

The protein belongs to the acetylglutamate kinase family. ArgB subfamily.

Its subcellular location is the cytoplasm. It catalyses the reaction N-acetyl-L-glutamate + ATP = N-acetyl-L-glutamyl 5-phosphate + ADP. It participates in amino-acid biosynthesis; L-arginine biosynthesis; N(2)-acetyl-L-ornithine from L-glutamate: step 2/4. Catalyzes the ATP-dependent phosphorylation of N-acetyl-L-glutamate. This Syntrophomonas wolfei subsp. wolfei (strain DSM 2245B / Goettingen) protein is Acetylglutamate kinase.